Consider the following 220-residue polypeptide: Large ribosomal subunit protein uL3 (220 aa).

Residues 61-81 (KGSKSNKYANKPAEGHAKKAD) are disordered.

Belongs to the universal ribosomal protein uL3 family. In terms of assembly, part of the 50S ribosomal subunit. Forms a cluster with proteins L14 and L19.

Its function is as follows. One of the primary rRNA binding proteins, it binds directly near the 3'-end of the 23S rRNA, where it nucleates assembly of the 50S subunit. This Staphylococcus epidermidis (strain ATCC 35984 / DSM 28319 / BCRC 17069 / CCUG 31568 / BM 3577 / RP62A) protein is Large ribosomal subunit protein uL3.